A 1320-amino-acid chain; its full sequence is Phosphoribosylformylglycinamidine synthase (1320 aa).

ATP-binding positions include glycine 310 to aspartate 321 and alanine 686. Residues aspartate 687, glutamate 726, asparagine 730, and aspartate 894 each coordinate Mg(2+). Residue serine 896 coordinates ATP. In terms of domain architecture, Glutamine amidotransferase type-1 spans valine 1067 to glycine 1320. Catalysis depends on cysteine 1160, which acts as the Nucleophile. Catalysis depends on residues histidine 1285 and glutamate 1287.

It in the N-terminal section; belongs to the FGAMS family. Monomer.

It is found in the cytoplasm. The catalysed reaction is N(2)-formyl-N(1)-(5-phospho-beta-D-ribosyl)glycinamide + L-glutamine + ATP + H2O = 2-formamido-N(1)-(5-O-phospho-beta-D-ribosyl)acetamidine + L-glutamate + ADP + phosphate + H(+). It participates in purine metabolism; IMP biosynthesis via de novo pathway; 5-amino-1-(5-phospho-D-ribosyl)imidazole from N(2)-formyl-N(1)-(5-phospho-D-ribosyl)glycinamide: step 1/2. Phosphoribosylformylglycinamidine synthase involved in the purines biosynthetic pathway. Catalyzes the ATP-dependent conversion of formylglycinamide ribonucleotide (FGAR) and glutamine to yield formylglycinamidine ribonucleotide (FGAM) and glutamate. In Colwellia psychrerythraea (strain 34H / ATCC BAA-681) (Vibrio psychroerythus), this protein is Phosphoribosylformylglycinamidine synthase.